The following is a 174-amino-acid chain: RNA pyrophosphohydrolase (174 aa).

The Nudix hydrolase domain occupies 6 to 149; it reads GFRANVGIVI…KREVYRRAMK (144 aa). The Nudix box signature appears at 38–59; sequence GGIDEGETAEQTMYRELYEEVG.

It belongs to the Nudix hydrolase family. RppH subfamily. It depends on a divalent metal cation as a cofactor.

Functionally, accelerates the degradation of transcripts by removing pyrophosphate from the 5'-end of triphosphorylated RNA, leading to a more labile monophosphorylated state that can stimulate subsequent ribonuclease cleavage. This is RNA pyrophosphohydrolase from Pseudoalteromonas atlantica (strain T6c / ATCC BAA-1087).